The primary structure comprises 570 residues: Sulfite reductase [NADPH] hemoprotein beta-component (570 aa).

Positions 434, 440, 479, and 483 each coordinate [4Fe-4S] cluster. C483 provides a ligand contact to siroheme.

Belongs to the nitrite and sulfite reductase 4Fe-4S domain family. Alpha(8)-beta(8). The alpha component is a flavoprotein, the beta component is a hemoprotein. Requires siroheme as cofactor. The cofactor is [4Fe-4S] cluster.

It catalyses the reaction hydrogen sulfide + 3 NADP(+) + 3 H2O = sulfite + 3 NADPH + 4 H(+). It participates in sulfur metabolism; hydrogen sulfide biosynthesis; hydrogen sulfide from sulfite (NADPH route): step 1/1. In terms of biological role, component of the sulfite reductase complex that catalyzes the 6-electron reduction of sulfite to sulfide. This is one of several activities required for the biosynthesis of L-cysteine from sulfate. The sequence is that of Sulfite reductase [NADPH] hemoprotein beta-component from Shigella flexneri.